The following is a 274-amino-acid chain: Diaminopimelate epimerase (274 aa).

Residues Asn-11 and Asn-65 each contribute to the substrate site. Cys-74 acts as the Proton donor in catalysis. Residues 75–76, Asn-158, Asn-191, and 209–210 each bind substrate; these read GN and ER. The active-site Proton acceptor is the Cys-218. Residue 219–220 participates in substrate binding; sequence GT.

Belongs to the diaminopimelate epimerase family. In terms of assembly, homodimer.

It is found in the cytoplasm. The enzyme catalyses (2S,6S)-2,6-diaminopimelate = meso-2,6-diaminopimelate. It participates in amino-acid biosynthesis; L-lysine biosynthesis via DAP pathway; DL-2,6-diaminopimelate from LL-2,6-diaminopimelate: step 1/1. Its function is as follows. Catalyzes the stereoinversion of LL-2,6-diaminopimelate (L,L-DAP) to meso-diaminopimelate (meso-DAP), a precursor of L-lysine and an essential component of the bacterial peptidoglycan. This is Diaminopimelate epimerase from Carboxydothermus hydrogenoformans (strain ATCC BAA-161 / DSM 6008 / Z-2901).